We begin with the raw amino-acid sequence, 524 residues long: Glucose-6-phosphate isomerase (524 aa).

The Proton donor role is filled by Glu-322. Residues His-351 and Lys-453 contribute to the active site.

Belongs to the GPI family.

The protein localises to the cytoplasm. The enzyme catalyses alpha-D-glucose 6-phosphate = beta-D-fructose 6-phosphate. Its pathway is carbohydrate biosynthesis; gluconeogenesis. It functions in the pathway carbohydrate degradation; glycolysis; D-glyceraldehyde 3-phosphate and glycerone phosphate from D-glucose: step 2/4. Its function is as follows. Catalyzes the reversible isomerization of glucose-6-phosphate to fructose-6-phosphate. The protein is Glucose-6-phosphate isomerase of Prochlorococcus marinus (strain NATL2A).